The following is a 197-amino-acid chain: ATP-dependent Clp protease proteolytic subunit (197 aa).

Catalysis depends on Ser-97, which acts as the Nucleophile. His-122 is an active-site residue.

It belongs to the peptidase S14 family. As to quaternary structure, fourteen ClpP subunits assemble into 2 heptameric rings which stack back to back to give a disk-like structure with a central cavity, resembling the structure of eukaryotic proteasomes.

Its subcellular location is the cytoplasm. It carries out the reaction Hydrolysis of proteins to small peptides in the presence of ATP and magnesium. alpha-casein is the usual test substrate. In the absence of ATP, only oligopeptides shorter than five residues are hydrolyzed (such as succinyl-Leu-Tyr-|-NHMec, and Leu-Tyr-Leu-|-Tyr-Trp, in which cleavage of the -Tyr-|-Leu- and -Tyr-|-Trp bonds also occurs).. Its function is as follows. Cleaves peptides in various proteins in a process that requires ATP hydrolysis. Has a chymotrypsin-like activity. Plays a major role in the degradation of misfolded proteins. The protein is ATP-dependent Clp protease proteolytic subunit of Trichlorobacter lovleyi (strain ATCC BAA-1151 / DSM 17278 / SZ) (Geobacter lovleyi).